The chain runs to 428 residues: MSFQSLGRDDLLAQHELQQRNYAELQAKQLKLDLTRGKPSPEQLDLSNGLLSLPGDGADAYRDGHGTDTRNYGGVQGLPELRAIFAELLGLPVENLIAGNNASLEMMHDSVVFSLLHGGLDSPRPWSAEPTVKFLCPAPGYDRHFAITESFGIENVPVPIREDGPDVDVIEQLVASDPTIKGIWCVPVYSNPTGATYSTDVIRRLVQMPTAAKDFRLMWDNAYAVHTLTDEFVEPVDVLGLAAAAGNPNRPLVFASTSKITFAGAGVSFLGASADNIAWYLKHAGKKSIGPDKVNQLRHLRFFGDADGVRRQMQRHRELIAPKFALVAEILEDRLGESKIASWTDPKGGYFVSLDVWPGTAKRTVALAKDAGIAVTEAGSAFPYRKDPEDKNIRIAPTFPSLPDVRDAIDGLATCALLAATEALLGDK.

Residue glycine 37 coordinates substrate. Residues tyrosine 72, 102-105 (ASLE), asparagine 191, 222-225 (AYAV), and 256-258 (STS) each bind pyridoxal 5'-phosphate. Residue lysine 339 forms an Isoglutamyl lysine isopeptide (Lys-Gln) (interchain with Q-Cter in protein Pup) linkage.

The protein belongs to the class-I pyridoxal-phosphate-dependent aminotransferase family. It depends on pyridoxal 5'-phosphate as a cofactor.

This chain is Putative aminotransferase MSMEG_6286/MSMEI_6121, found in Mycolicibacterium smegmatis (strain ATCC 700084 / mc(2)155) (Mycobacterium smegmatis).